The chain runs to 99 residues: Class II hydrophobin 2 (99 aa).

The first 15 residues, 1-15 (MKFFVVAALFAGALA), serve as a signal peptide directing secretion. Intrachain disulfides connect cysteine 30/cysteine 79 and cysteine 40/cysteine 70.

Belongs to the cerato-ulmin hydrophobin family. In terms of assembly, homotetramer. Further self-assembles to form highly ordered films at water-air interfaces through intermolecular interactions.

It is found in the secreted. The protein localises to the cell wall. Its function is as follows. Aerial growth, conidiation, and dispersal of filamentous fungi in the environment rely upon a capability of their secreting small amphipathic proteins called hydrophobins (HPBs) with low sequence identity. Class I can self-assemble into an outermost layer of rodlet bundles on aerial cell surfaces, conferring cellular hydrophobicity that supports fungal growth, development and dispersal; whereas Class II form highly ordered films at water-air interfaces through intermolecular interactions but contribute nothing to the rodlet structure. HYD2 is a class II hydrophobin that contributes to the fruiting body development. This is Class II hydrophobin 2 from Cordyceps militaris (Caterpillar fungus).